A 281-amino-acid chain; its full sequence is ATP phosphoribosyltransferase (281 aa).

It belongs to the ATP phosphoribosyltransferase family. Long subfamily. It depends on Mg(2+) as a cofactor.

The protein resides in the cytoplasm. It catalyses the reaction 1-(5-phospho-beta-D-ribosyl)-ATP + diphosphate = 5-phospho-alpha-D-ribose 1-diphosphate + ATP. Its pathway is amino-acid biosynthesis; L-histidine biosynthesis; L-histidine from 5-phospho-alpha-D-ribose 1-diphosphate: step 1/9. Feedback inhibited by histidine. Its function is as follows. Catalyzes the condensation of ATP and 5-phosphoribose 1-diphosphate to form N'-(5'-phosphoribosyl)-ATP (PR-ATP). Has a crucial role in the pathway because the rate of histidine biosynthesis seems to be controlled primarily by regulation of HisG enzymatic activity. The polypeptide is ATP phosphoribosyltransferase (Salinispora tropica (strain ATCC BAA-916 / DSM 44818 / JCM 13857 / NBRC 105044 / CNB-440)).